The primary structure comprises 503 residues: Glutamate--tRNA ligase (503 aa).

The 'HIGH' region signature appears at 15 to 25 (PSPTGHLHVGG). The 'KMSKS' region signature appears at 262–266 (KLSKR). Residue Lys265 participates in ATP binding.

This sequence belongs to the class-I aminoacyl-tRNA synthetase family. Glutamate--tRNA ligase type 1 subfamily. As to quaternary structure, monomer.

The protein resides in the cytoplasm. It carries out the reaction tRNA(Glu) + L-glutamate + ATP = L-glutamyl-tRNA(Glu) + AMP + diphosphate. Catalyzes the attachment of glutamate to tRNA(Glu) in a two-step reaction: glutamate is first activated by ATP to form Glu-AMP and then transferred to the acceptor end of tRNA(Glu). The sequence is that of Glutamate--tRNA ligase from Chlorobium phaeobacteroides (strain BS1).